A 358-amino-acid polypeptide reads, in one-letter code: 3-isopropylmalate dehydrogenase (358 aa).

Residue glycine 77 to glutamate 90 participates in NAD(+) binding. Arginine 98, arginine 108, arginine 137, and aspartate 226 together coordinate substrate. Mg(2+)-binding residues include aspartate 226, aspartate 250, and aspartate 254. Glycine 284 to asparagine 296 serves as a coordination point for NAD(+).

Belongs to the isocitrate and isopropylmalate dehydrogenases family. LeuB type 1 subfamily. In terms of assembly, homodimer. It depends on Mg(2+) as a cofactor. Mn(2+) serves as cofactor.

The protein localises to the cytoplasm. It catalyses the reaction (2R,3S)-3-isopropylmalate + NAD(+) = 4-methyl-2-oxopentanoate + CO2 + NADH. It participates in amino-acid biosynthesis; L-leucine biosynthesis; L-leucine from 3-methyl-2-oxobutanoate: step 3/4. In terms of biological role, catalyzes the oxidation of 3-carboxy-2-hydroxy-4-methylpentanoate (3-isopropylmalate) to 3-carboxy-4-methyl-2-oxopentanoate. The product decarboxylates to 4-methyl-2 oxopentanoate. The sequence is that of 3-isopropylmalate dehydrogenase from Haemophilus influenzae (strain 86-028NP).